The chain runs to 336 residues: Probable ADP-ribosylation factor GTPase-activating protein AGD13 (336 aa).

The Arf-GAP domain occupies 15-137 (KRRIRDLLNQ…EFLKPSLRIT (123 aa)). The C4-type zinc finger occupies 30–53 (CADCGASDPKWASANIGVFICLKC). One can recognise a C2 domain in the interval 162–280 (RTNSSSQTMF…AMAFGDPEMF (119 aa)). Ca(2+) contacts are provided by Asp249, Ser252, and Asp255.

It depends on Ca(2+) as a cofactor.

Its function is as follows. GTPase-activating protein (GAP) for ADP ribosylation factor (ARF). The protein is Probable ADP-ribosylation factor GTPase-activating protein AGD13 (AGD13) of Arabidopsis thaliana (Mouse-ear cress).